A 415-amino-acid polypeptide reads, in one-letter code: Gamma-glutamyl phosphate reductase (415 aa).

The protein belongs to the gamma-glutamyl phosphate reductase family.

It localises to the cytoplasm. It catalyses the reaction L-glutamate 5-semialdehyde + phosphate + NADP(+) = L-glutamyl 5-phosphate + NADPH + H(+). It participates in amino-acid biosynthesis; L-proline biosynthesis; L-glutamate 5-semialdehyde from L-glutamate: step 2/2. Its function is as follows. Catalyzes the NADPH-dependent reduction of L-glutamate 5-phosphate into L-glutamate 5-semialdehyde and phosphate. The product spontaneously undergoes cyclization to form 1-pyrroline-5-carboxylate. The sequence is that of Gamma-glutamyl phosphate reductase from Bacillus cereus (strain AH187).